Reading from the N-terminus, the 496-residue chain is uncharacterized protein (496 aa).

The signal sequence occupies residues 1–19 (MTTGYILIAAILILGGVIA). A helical membrane pass occupies residues 45–67 (AVLVTILTGGLVSATTLAILFIA). The tract at residues 113-137 (LETTRTDKKQVETQRDQAKKEKLKA) is disordered.

It localises to the membrane. This is an uncharacterized protein from Nostoc sp. (strain PCC 7120 / SAG 25.82 / UTEX 2576).